A 610-amino-acid chain; its full sequence is Elongation factor 4 (610 aa).

A tr-type G domain is found at 7-189; the sequence is SRIRNFSIIA…AIVQRIPPPK (183 aa). GTP is bound by residues 19–24 and 136–139; these read DHGKST and NKID.

The protein belongs to the TRAFAC class translation factor GTPase superfamily. Classic translation factor GTPase family. LepA subfamily.

It localises to the cell inner membrane. It catalyses the reaction GTP + H2O = GDP + phosphate + H(+). Functionally, required for accurate and efficient protein synthesis under certain stress conditions. May act as a fidelity factor of the translation reaction, by catalyzing a one-codon backward translocation of tRNAs on improperly translocated ribosomes. Back-translocation proceeds from a post-translocation (POST) complex to a pre-translocation (PRE) complex, thus giving elongation factor G a second chance to translocate the tRNAs correctly. Binds to ribosomes in a GTP-dependent manner. The sequence is that of Elongation factor 4 from Thermus thermophilus (strain ATCC 27634 / DSM 579 / HB8).